Reading from the N-terminus, the 103-residue chain is Co-chaperonin GroES (103 aa).

Residues 31 to 67 (GGILLPDTAKEKPQVGEVAQVGPGKRNEDGSRQSPEV) form a disordered region.

This sequence belongs to the GroES chaperonin family. In terms of assembly, heptamer of 7 subunits arranged in a ring. Interacts with the chaperonin GroEL.

The protein localises to the cytoplasm. In terms of biological role, together with the chaperonin GroEL, plays an essential role in assisting protein folding. The GroEL-GroES system forms a nano-cage that allows encapsulation of the non-native substrate proteins and provides a physical environment optimized to promote and accelerate protein folding. GroES binds to the apical surface of the GroEL ring, thereby capping the opening of the GroEL channel. This Prochlorococcus marinus (strain NATL2A) protein is Co-chaperonin GroES.